A 61-amino-acid polypeptide reads, in one-letter code: Photosystem II reaction center protein K (61 aa).

Residues 1–24 (MPNILSLTCICFNSVLYPTSFFFA) constitute a propeptide that is removed on maturation. The chain crosses the membrane as a helical span at residues 32–52 (IFNPIVDIMPVIPLFFFLLAF).

The protein belongs to the PsbK family. In terms of assembly, PSII is composed of 1 copy each of membrane proteins PsbA, PsbB, PsbC, PsbD, PsbE, PsbF, PsbH, PsbI, PsbJ, PsbK, PsbL, PsbM, PsbT, PsbX, PsbY, PsbZ, Psb30/Ycf12, at least 3 peripheral proteins of the oxygen-evolving complex and a large number of cofactors. It forms dimeric complexes. Detected in both etioplasts and green leaves; PSII is only assembled in green leaves.

The protein localises to the plastid. It is found in the chloroplast thylakoid membrane. In terms of biological role, one of the components of the core complex of photosystem II (PSII). PSII is a light-driven water:plastoquinone oxidoreductase that uses light energy to abstract electrons from H(2)O, generating O(2) and a proton gradient subsequently used for ATP formation. It consists of a core antenna complex that captures photons, and an electron transfer chain that converts photonic excitation into a charge separation. The polypeptide is Photosystem II reaction center protein K (Hordeum vulgare (Barley)).